Reading from the N-terminus, the 283-residue chain is ATP phosphoribosyltransferase (283 aa).

Belongs to the ATP phosphoribosyltransferase family. Long subfamily. In terms of assembly, equilibrium between an active dimeric form, an inactive hexameric form and higher aggregates. Interconversion between the various forms is largely reversible and is influenced by the natural substrates and inhibitors of the enzyme. Requires Mg(2+) as cofactor.

The protein localises to the cytoplasm. It carries out the reaction 1-(5-phospho-beta-D-ribosyl)-ATP + diphosphate = 5-phospho-alpha-D-ribose 1-diphosphate + ATP. It functions in the pathway amino-acid biosynthesis; L-histidine biosynthesis; L-histidine from 5-phospho-alpha-D-ribose 1-diphosphate: step 1/9. With respect to regulation, feedback inhibited by histidine. Its function is as follows. Catalyzes the condensation of ATP and 5-phosphoribose 1-diphosphate to form N'-(5'-phosphoribosyl)-ATP (PR-ATP). Has a crucial role in the pathway because the rate of histidine biosynthesis seems to be controlled primarily by regulation of HisG enzymatic activity. This chain is ATP phosphoribosyltransferase, found in Mycobacterium sp. (strain JLS).